The sequence spans 263 residues: Small ribosomal subunit protein eS4 (263 aa).

The S4 RNA-binding domain maps to 42–104 (LPLIIFLRNK…TGENFRLIYD (63 aa)). K230 participates in a covalent cross-link: Glycyl lysine isopeptide (Lys-Gly) (interchain with G-Cter in SUMO2). K233 is modified (N6-acetyllysine).

This sequence belongs to the eukaryotic ribosomal protein eS4 family. Component of the small ribosomal subunit. Part of the small subunit (SSU) processome, composed of more than 70 proteins and the RNA chaperone small nucleolar RNA (snoRNA) U3. Identified in a IGF2BP1-dependent mRNP granule complex containing untranslated mRNAs.

It localises to the cytoplasm. It is found in the nucleus. Its subcellular location is the nucleolus. Its function is as follows. Component of the small ribosomal subunit. The ribosome is a large ribonucleoprotein complex responsible for the synthesis of proteins in the cell. Part of the small subunit (SSU) processome, first precursor of the small eukaryotic ribosomal subunit. During the assembly of the SSU processome in the nucleolus, many ribosome biogenesis factors, an RNA chaperone and ribosomal proteins associate with the nascent pre-rRNA and work in concert to generate RNA folding, modifications, rearrangements and cleavage as well as targeted degradation of pre-ribosomal RNA by the RNA exosome. The sequence is that of Small ribosomal subunit protein eS4 (RPS4X) from Oryctolagus cuniculus (Rabbit).